We begin with the raw amino-acid sequence, 416 residues long: Serine hydroxymethyltransferase (416 aa).

Residues L121 and 125 to 127 (GHL) each bind (6S)-5,6,7,8-tetrahydrofolate. K230 carries the post-translational modification N6-(pyridoxal phosphate)lysine. 355–357 (SPF) contributes to the (6S)-5,6,7,8-tetrahydrofolate binding site.

This sequence belongs to the SHMT family. Homodimer. Requires pyridoxal 5'-phosphate as cofactor.

It is found in the cytoplasm. The enzyme catalyses (6R)-5,10-methylene-5,6,7,8-tetrahydrofolate + glycine + H2O = (6S)-5,6,7,8-tetrahydrofolate + L-serine. Its pathway is one-carbon metabolism; tetrahydrofolate interconversion. It functions in the pathway amino-acid biosynthesis; glycine biosynthesis; glycine from L-serine: step 1/1. Its function is as follows. Catalyzes the reversible interconversion of serine and glycine with tetrahydrofolate (THF) serving as the one-carbon carrier. This reaction serves as the major source of one-carbon groups required for the biosynthesis of purines, thymidylate, methionine, and other important biomolecules. Also exhibits THF-independent aldolase activity toward beta-hydroxyamino acids, producing glycine and aldehydes, via a retro-aldol mechanism. This Streptococcus thermophilus (strain ATCC BAA-250 / LMG 18311) protein is Serine hydroxymethyltransferase.